The sequence spans 407 residues: Phosphopentomutase (407 aa).

The Mn(2+) site is built by D11, D305, H310, D346, H347, and H358.

It belongs to the phosphopentomutase family. The cofactor is Mn(2+).

It is found in the cytoplasm. It catalyses the reaction 2-deoxy-alpha-D-ribose 1-phosphate = 2-deoxy-D-ribose 5-phosphate. The catalysed reaction is alpha-D-ribose 1-phosphate = D-ribose 5-phosphate. Its pathway is carbohydrate degradation; 2-deoxy-D-ribose 1-phosphate degradation; D-glyceraldehyde 3-phosphate and acetaldehyde from 2-deoxy-alpha-D-ribose 1-phosphate: step 1/2. Functionally, isomerase that catalyzes the conversion of deoxy-ribose 1-phosphate (dRib-1-P) and ribose 1-phosphate (Rib-1-P) to deoxy-ribose 5-phosphate (dRib-5-P) and ribose 5-phosphate (Rib-5-P), respectively. This Legionella pneumophila subsp. pneumophila (strain Philadelphia 1 / ATCC 33152 / DSM 7513) protein is Phosphopentomutase.